The sequence spans 86 residues: Omega-theraphotoxin-Hhn1f 4 (86 aa).

An N-terminal signal peptide occupies residues 1–21; that stretch reads MKSIVFVALFGLALLAVVCSA. Residues 22-50 constitute a propeptide that is removed on maturation; it reads SEDAHKELLKEVVRAMVVDKTDAVQAGER. Disulfide bonds link Cys52-Cys66, Cys59-Cys71, and Cys65-Cys78.

It belongs to the neurotoxin 10 (Hwtx-1) family. 17 (Hntx-9) subfamily. Expressed by the venom gland.

It is found in the secreted. Its function is as follows. Ion channel inhibitor. The polypeptide is Omega-theraphotoxin-Hhn1f 4 (Cyriopagopus hainanus (Chinese bird spider)).